The chain runs to 402 residues: Flavohemoprotein (402 aa).

Residues 1 to 136 (MLSEKTIEIV…IADAFISIEA (136 aa)) form the Globin domain. Residue histidine 85 participates in heme b binding. Catalysis depends on charge relay system residues tyrosine 95 and glutamate 135. The reductase stretch occupies residues 147–402 (GGWKDFRNFV…EFFGPAASLQ (256 aa)). The region spanning 150-260 (KDFRNFVVVK…SAPAGDFVLN (111 aa)) is the FAD-binding FR-type domain. FAD-binding positions include tyrosine 188 and 204–207 (RQYS). 273 to 278 (GVGITP) is an NADP(+) binding site. 394–397 (FFGP) provides a ligand contact to FAD.

The protein belongs to the globin family. Two-domain flavohemoproteins subfamily. In the C-terminal section; belongs to the flavoprotein pyridine nucleotide cytochrome reductase family. Heme b serves as cofactor. The cofactor is FAD.

It carries out the reaction 2 nitric oxide + NADPH + 2 O2 = 2 nitrate + NADP(+) + H(+). It catalyses the reaction 2 nitric oxide + NADH + 2 O2 = 2 nitrate + NAD(+) + H(+). Functionally, is involved in NO detoxification in an aerobic process, termed nitric oxide dioxygenase (NOD) reaction that utilizes O(2) and NAD(P)H to convert NO to nitrate, which protects the bacterium from various noxious nitrogen compounds. Therefore, plays a central role in the inducible response to nitrosative stress. This is Flavohemoprotein from Bacillus cereus (strain ATCC 10987 / NRS 248).